Consider the following 407-residue polypeptide: Putative glucose/galactose transporter (407 aa).

12 helical membrane-spanning segments follow: residues glycine 11–isoleucine 31, leucine 47–isoleucine 67, isoleucine 70–phenylalanine 90, phenylalanine 96–leucine 116, valine 139–phenylalanine 159, valine 180–leucine 200, phenylalanine 225–phenylalanine 245, histidine 263–methionine 283, isoleucine 300–phenylalanine 320, valine 321–glycine 341, glycine 349–threonine 369, and asparagine 378–leucine 398.

The protein belongs to the major facilitator superfamily. FHS transporter (TC 2.A.1.7) family.

It localises to the cell inner membrane. Its function is as follows. Intake of glucose and galactose. This chain is Putative glucose/galactose transporter (gluP), found in Helicobacter pylori (strain J99 / ATCC 700824) (Campylobacter pylori J99).